The sequence spans 250 residues: Ureidoacrylate amidohydrolase RutB (250 aa).

D44 functions as the Proton acceptor in the catalytic mechanism. The active site involves K153. C186 (nucleophile) is an active-site residue.

The protein belongs to the isochorismatase family. RutB subfamily.

The catalysed reaction is (Z)-3-ureidoacrylate + H2O + H(+) = (Z)-3-aminoacrylate + NH4(+) + CO2. It carries out the reaction (Z)-3-ureidoacrylate + H2O = (Z)-3-aminoacrylate + carbamate + H(+). It catalyses the reaction (Z)-2-methylureidoacrylate + H2O + H(+) = (Z)-2-methylaminoacrylate + NH4(+) + CO2. Functionally, hydrolyzes ureidoacrylate to form aminoacrylate and carbamate. The carbamate hydrolyzes spontaneously, thereby releasing one of the nitrogen atoms of the pyrimidine ring as ammonia and one of its carbon atoms as CO2. The chain is Ureidoacrylate amidohydrolase RutB from Pantoea ananatis (strain LMG 20103).